Reading from the N-terminus, the 136-residue chain is DNA-directed RNA polymerase subunit omega (136 aa).

Residues 81–136 (EAEAVPLLSSSPAAAAVAPQSSGDDGDIQFDRMSEEDLLRGLENLAPPTETEDEGD) form a disordered region. Residues 83–99 (EAVPLLSSSPAAAAVAP) show a composition bias toward low complexity. The span at 109–120 (QFDRMSEEDLLR) shows a compositional bias: basic and acidic residues.

Belongs to the RNA polymerase subunit omega family. In terms of assembly, the RNAP catalytic core consists of 2 alpha, 1 beta, 1 beta' and 1 omega subunit. When a sigma factor is associated with the core the holoenzyme is formed, which can initiate transcription.

The enzyme catalyses RNA(n) + a ribonucleoside 5'-triphosphate = RNA(n+1) + diphosphate. Promotes RNA polymerase assembly. Latches the N- and C-terminal regions of the beta' subunit thereby facilitating its interaction with the beta and alpha subunits. This chain is DNA-directed RNA polymerase subunit omega, found in Methylobacterium nodulans (strain LMG 21967 / CNCM I-2342 / ORS 2060).